The sequence spans 901 residues: Probable inorganic carbon transporter subunit DabA (901 aa).

Zn(2+) is bound by residues Cys-424, Asp-426, His-606, and Cys-621.

The protein belongs to the inorganic carbon transporter (TC 9.A.2) DabA family. Forms a complex with DabB. Requires Zn(2+) as cofactor.

The protein localises to the cell membrane. Functionally, part of an energy-coupled inorganic carbon pump. This chain is Probable inorganic carbon transporter subunit DabA, found in Staphylococcus aureus (strain bovine RF122 / ET3-1).